The following is a 493-amino-acid chain: Galactose-1-phosphate uridylyltransferase (493 aa).

This sequence belongs to the galactose-1-phosphate uridylyltransferase type 2 family.

It is found in the cytoplasm. The catalysed reaction is alpha-D-galactose 1-phosphate + UDP-alpha-D-glucose = alpha-D-glucose 1-phosphate + UDP-alpha-D-galactose. It participates in carbohydrate metabolism; galactose metabolism. The sequence is that of Galactose-1-phosphate uridylyltransferase from Streptococcus pneumoniae (strain CGSP14).